The following is a 345-amino-acid chain: Fructose-1,6-bisphosphatase class 1 (345 aa).

Residues E90, D109, L111, and D112 each contribute to the Mg(2+) site. Substrate contacts are provided by residues D112–S115 and N199. E271 lines the Mg(2+) pocket.

The protein belongs to the FBPase class 1 family. As to quaternary structure, homotetramer. Requires Mg(2+) as cofactor.

It localises to the cytoplasm. It catalyses the reaction beta-D-fructose 1,6-bisphosphate + H2O = beta-D-fructose 6-phosphate + phosphate. It functions in the pathway carbohydrate biosynthesis; Calvin cycle. In Rhodopseudomonas palustris (strain BisB5), this protein is Fructose-1,6-bisphosphatase class 1.